Consider the following 384-residue polypeptide: Dehydrogenase ALT3 (384 aa).

It belongs to the iron-containing alcohol dehydrogenase family. Requires Fe cation as cofactor.

It participates in mycotoxin biosynthesis. In terms of biological role, dehydrogenase; part of the gene cluster that mediates the biosynthesis of the host-selective toxins (HSTs) AAL-toxins, sphinganine-analog mycotoxins responsible for Alternaria stem canker on tomato by the tomato pathotype. The biosynthesis starts with the polyketide synthase ALT1-catalyzed C-16 carbon chain assembly from one starter acetyl-CoA unit with malonyl-CoA extender units. ALT1 also selectively transfers methyl groups at the first and the third cycle of chain elongation for AAL toxin. The C-16 polyketide chain is released from the enzyme by a nucleophilic attack of a carbanion, which is derived from R-carbon of glycin by decarboxylation, on the carbonyl carbon of polyketide acyl chain. This step is probably catalyzed by a pyridoxal 5'-phosphate-dependent aminoacyl transferase ALT4. The respective functions of the other enzymes encoded by the cluster have still to be elucidated. The sphingosine N-acyltransferase-like protein ALT7 seems not to act as a resistance/self-tolerance factor against the toxin in the toxin biosynthetic gene cluster, contrary to what is expected. The polypeptide is Dehydrogenase ALT3 (Alternaria alternata (Alternaria rot fungus)).